The chain runs to 188 residues: dCTP deaminase (188 aa).

Residues 111–116, 135–137, Gln-156, Tyr-170, and Gln-180 contribute to the dCTP site; these read KSTYAR and TLE. Catalysis depends on Glu-137, which acts as the Proton donor/acceptor.

This sequence belongs to the dCTP deaminase family. In terms of assembly, homotrimer.

It carries out the reaction dCTP + H2O + H(+) = dUTP + NH4(+). The protein operates within pyrimidine metabolism; dUMP biosynthesis; dUMP from dCTP (dUTP route): step 1/2. In terms of biological role, catalyzes the deamination of dCTP to dUTP. The sequence is that of dCTP deaminase from Cupriavidus pinatubonensis (strain JMP 134 / LMG 1197) (Cupriavidus necator (strain JMP 134)).